Here is a 498-residue protein sequence, read N- to C-terminus: ATP synthase subunit beta, chloroplastic (498 aa).

Phosphothreonine is present on T6. S13 carries the phosphoserine modification. G172–T179 lines the ATP pocket.

Belongs to the ATPase alpha/beta chains family. F-type ATPases have 2 components, CF(1) - the catalytic core - and CF(0) - the membrane proton channel. CF(1) has five subunits: alpha(3), beta(3), gamma(1), delta(1), epsilon(1). CF(0) has four main subunits: a(1), b(1), b'(1) and c(9-12).

Its subcellular location is the plastid. The protein resides in the chloroplast thylakoid membrane. It carries out the reaction ATP + H2O + 4 H(+)(in) = ADP + phosphate + 5 H(+)(out). In terms of biological role, produces ATP from ADP in the presence of a proton gradient across the membrane. The catalytic sites are hosted primarily by the beta subunits. The protein is ATP synthase subunit beta, chloroplastic of Brassica napus (Rape).